The sequence spans 304 residues: Ribonuclease Z (304 aa).

Residues histidine 63, histidine 65, aspartate 67, histidine 68, histidine 143, aspartate 213, and histidine 271 each contribute to the Zn(2+) site. Aspartate 67 (proton acceptor) is an active-site residue.

It belongs to the RNase Z family. In terms of assembly, homodimer. Zn(2+) serves as cofactor.

The enzyme catalyses Endonucleolytic cleavage of RNA, removing extra 3' nucleotides from tRNA precursor, generating 3' termini of tRNAs. A 3'-hydroxy group is left at the tRNA terminus and a 5'-phosphoryl group is left at the trailer molecule.. Zinc phosphodiesterase, which displays some tRNA 3'-processing endonuclease activity. Probably involved in tRNA maturation, by removing a 3'-trailer from precursor tRNA. The polypeptide is Ribonuclease Z (Porphyromonas gingivalis (strain ATCC BAA-308 / W83)).